The sequence spans 397 residues: Major outer membrane porin, serovar C (397 aa).

An N-terminal signal peptide occupies residues 1 to 22 (MKKLLKSVLVFAALSSASSLQA).

The protein belongs to the chlamydial porin (CP) (TC 1.B.2) family. In terms of assembly, part of a disulfide cross-linked outer membrane complex (COMC) composed of the major outer membrane porin (MOMP), the small cysteine-rich protein (OmcA) and the large cysteine-rich periplasmic protein (OmcB).

The protein localises to the cell outer membrane. Its function is as follows. In elementary bodies (EBs, the infectious stage, which is able to survive outside the host cell) provides the structural integrity of the outer envelope through disulfide cross-links with the small cysteine-rich protein and the large cysteine-rich periplasmic protein. It has been described in publications as the Sarkosyl-insoluble COMC (Chlamydia outer membrane complex), and serves as the functional equivalent of peptidoglycan. Functionally, permits diffusion of specific solutes through the outer membrane. The protein is Major outer membrane porin, serovar C (ompA) of Chlamydia trachomatis.